Reading from the N-terminus, the 488-residue chain is Probable malate:quinone oxidoreductase (488 aa).

Belongs to the MQO family. FAD is required as a cofactor.

The catalysed reaction is (S)-malate + a quinone = a quinol + oxaloacetate. The protein operates within carbohydrate metabolism; tricarboxylic acid cycle; oxaloacetate from (S)-malate (quinone route): step 1/1. This chain is Probable malate:quinone oxidoreductase, found in Neisseria meningitidis serogroup A / serotype 4A (strain DSM 15465 / Z2491).